The chain runs to 375 residues: Outer membrane porin C (375 aa).

The signal sequence occupies residues 1–21 (MKVKVLSLLVPALLVAGAANA). Residues 22–27 (AEVYNK) traverse the membrane as a beta stranded segment. Topologically, residues 28-29 (DG) are periplasmic. Residues 30–44 (NKLDLYGKVDGLHYF) traverse the membrane as a beta stranded segment. Over 45–50 (SDDKSV) the chain is Extracellular. A beta stranded membrane pass occupies residues 51-66 (DGDQTYMRLGFKGETQ). Residues 67 to 70 (VTDQ) lie on the Periplasmic side of the membrane. The beta stranded transmembrane segment at 71–82 (LTGYGQWEYQIQ) threads the bilayer. At 83–91 (GNAPESENN) the chain is on the extracellular side. Residues 92-103 (SWTRVAFAGLKF) traverse the membrane as a beta stranded segment. At 104–105 (QD) the chain is on the periplasmic side. A beta stranded membrane pass occupies residues 106 to 113 (IGSFDYGR). Residues 114–146 (NYGVVYDVTSWTDVLPEFGGDTYGSDNFMQQRG) lie on the Extracellular side of the membrane. A beta stranded membrane pass occupies residues 147–156 (NGFATYRNTD). Residues 157–163 (FFGLVDG) lie on the Periplasmic side of the membrane. A beta stranded membrane pass occupies residues 164 to 172 (LNFAVQYQG). The Extracellular portion of the chain corresponds to 173 to 201 (QNGSVSGENDPDFTGHGITNNGRKALRQN). A beta stranded transmembrane segment spans residues 202–212 (GDGVGGSITYD). Topologically, residues 213–215 (YEG) are periplasmic. A beta stranded transmembrane segment spans residues 216–226 (FGVGAAVSSSK). The Extracellular portion of the chain corresponds to 227 to 241 (RTWDQNNTGLIGTGD). The chain crosses the membrane as a beta stranded span at residues 242–254 (RAETYTGGLKYDA). At 255 to 256 (NN) the chain is on the periplasmic side. Residues 257-267 (IYLAAQYTQTY) traverse the membrane as a beta stranded segment. Topologically, residues 268–279 (NATRVGSLGWAN) are extracellular. A beta stranded transmembrane segment spans residues 280-292 (KAQNFEAVAQYQF). Residues 293–294 (DF) are Periplasmic-facing. A beta stranded membrane pass occupies residues 295–309 (GLRPSVAYLQSKGKN). The Extracellular segment spans residues 310-320 (LGVVAGRNYDD). The beta stranded transmembrane segment at 321 to 335 (EDILKYVDVGATYYF) threads the bilayer. Residues 336-338 (NKN) are Periplasmic-facing. A beta stranded membrane pass occupies residues 339-348 (MSTYVDYKIN). The Extracellular segment spans residues 349–364 (LLDDNQFTRAAGINTD). The chain crosses the membrane as a beta stranded span at residues 365 to 375 (DIVALGLVYQF).

It belongs to the Gram-negative porin family. As to quaternary structure, homotrimer. Forms mixed heterotrimers with OmpF; other mixed heterotrimers are also probable. The N- and C-termini are two parts of the same strand. Extracellular loop 3 folds back into the lumen of the barrel forming a constriction zone that controls the pore size, while the trimer interface is formed by the packing of hydrophobic residues on the outer edges of beta strands 1 to 5 and further stabilized by extracellular loop 2 which reaches into the neighboring monomer.

It localises to the cell outer membrane. In terms of biological role, forms pores that allow passive diffusion of small molecules across the outer membrane, including some antibiotics. Variation of the residues in the constriction zone modifies the transverse electric field in the zone, altering antibiotic resistance. Functionally, (Microbial infection) Is not susceptible to CdiA-EC536-mediated toxicity, which uses OmpC-OmpF heterotrimers of some strains as its outer membrane receptor. Mutagenesis of extracellular loops L4 or L5 of this protein confers susceptibility to the toxin. In Escherichia coli O6:H1 (strain CFT073 / ATCC 700928 / UPEC), this protein is Outer membrane porin C (ompC).